A 324-amino-acid chain; its full sequence is MFCGDYVQGTIFPAPNFNPIMDAQMLGGALQGFDCDKDMLINILTQRCNAQRMMIAEAYQSMYGRDLIGDMREQLSDHFKDVMAGLMYPPPLYDAHELWHAMKGVGTDENCLIEILASRTNGEIFQMREAYCLQYSNNLQEDIYSETSGHFRDTLMNLVQGTREEGYTDPAMAAQDAMVLWEACQQKTGEHKTMLQMILCNKSYQQLRLVFQEFQNISGQDMVDAINECYDGYFQELLVAIVLCVRDKPAYFAYRLYSAIHDFGFHNKTVIRILIARSEIDLLTIRKRYKERYGKSLFHDIRNFASGHYKKALLAICAGDAEDY.

Annexin repeat units follow at residues 17-88, 89-160, 171-243, and 247-318; these read FNPI…GLMY, PPPL…NLVQ, AMAA…AIVL, and DKPA…AICA.

The protein belongs to the annexin family.

This chain is Annexin A10 (ANXA10), found in Homo sapiens (Human).